The following is a 568-amino-acid chain: Protein yellow (568 aa).

A signal peptide spans 1–28; it reads MHAQDKGGILPALSLLLIAVAMVSPSQA. Residues Asn-151 and Asn-222 are each glycosylated (N-linked (GlcNAc...) asparagine).

Belongs to the major royal jelly protein family.

Its subcellular location is the secreted. Its function is as follows. Controls the pigmentation pattern of the adult cuticle and larval mouth parts. This chain is Protein yellow (y), found in Drosophila subobscura (Fruit fly).